Here is a 75-residue protein sequence, read N- to C-terminus: Probable protein BRICK1-B (75 aa).

A coiled-coil region spans residues 41–72 (MSCRSRLATLNEKLTTLERRIEYIEARVTKGE).

This sequence belongs to the BRK1 family.

It localises to the cytoplasm. The protein resides in the cytoskeleton. Functionally, involved in regulation of actin and microtubule organization. Part of a WAVE complex that activates the Arp2/3 complex. The chain is Probable protein BRICK1-B (brk1-b) from Xenopus laevis (African clawed frog).